The primary structure comprises 222 residues: Protein-L-isoaspartate O-methyltransferase (222 aa).

Ser67 is an active-site residue.

The protein belongs to the methyltransferase superfamily. L-isoaspartyl/D-aspartyl protein methyltransferase family.

It is found in the cytoplasm. It catalyses the reaction [protein]-L-isoaspartate + S-adenosyl-L-methionine = [protein]-L-isoaspartate alpha-methyl ester + S-adenosyl-L-homocysteine. Functionally, catalyzes the methyl esterification of L-isoaspartyl residues in peptides and proteins that result from spontaneous decomposition of normal L-aspartyl and L-asparaginyl residues. It plays a role in the repair and/or degradation of damaged proteins. The sequence is that of Protein-L-isoaspartate O-methyltransferase from Parvibaculum lavamentivorans (strain DS-1 / DSM 13023 / NCIMB 13966).